Here is a 428-residue protein sequence, read N- to C-terminus: Glial fibrillary acidic protein (428 aa).

The segment at 1 to 68 is head; it reads MERRRVTSAT…KETRASERAE (68 aa). Position 7 is a phosphothreonine; by AURKB and ROCK1 (Thr7). Residue Arg12 is modified to Omega-N-methylarginine. Ser13 carries the post-translational modification Phosphoserine; by AURKB and ROCK1. Citrulline is present on residues Arg26 and Arg32. Ser34 carries the phosphoserine; by AURKB and ROCK1 modification. In terms of domain architecture, IF rod spans 65–373; it reads ERAEMMELND…KLLEGEENRI (309 aa). Residues 69 to 100 form a coil 1A region; that stretch reads MMELNDRFASYIEKVRFLEQQNKALAAELNQL. Ser78 carries the phosphoserine modification. The linker 1 stretch occupies residues 101 to 111; it reads RAKEPTKLADV. Phosphothreonine occurs at positions 106 and 146. Positions 112-210 are coil 1B; the sequence is YQAELRELRL…EEEVRELQEQ (99 aa). The segment at 211–226 is linker 12; that stretch reads LAQQQVHVEMDVAKPD. The segment at 227–248 is coil 2A; sequence LTAALREIRTQYEAVASSNMHE. The tract at residues 249–252 is linker 2; sequence AEEW. The segment at 253-373 is coil 2B; the sequence is YRSKFADLND…KLLEGEENRI (121 aa). The residue at position 266 (Arg266) is a Citrulline. A Phosphoserine modification is found at Ser319. Residues 374–428 form a tail region; the sequence is TIPVQTFSNLQIRETSLDTKSVSEGHLKRNIVVKTVEMRDGEVIKESKQEHKDVM. Thr379 is subject to Phosphothreonine. Ser381 is subject to Phosphoserine. 2 positions are modified to citrulline: Arg402 and Arg412.

This sequence belongs to the intermediate filament family. Interacts with SYNM. In terms of processing, phosphorylated by PKN1.

It localises to the cytoplasm. GFAP, a class-III intermediate filament, is a cell-specific marker that, during the development of the central nervous system, distinguishes astrocytes from other glial cells. The polypeptide is Glial fibrillary acidic protein (GFAP) (Bos taurus (Bovine)).